The following is a 534-amino-acid chain: MFS transporter fmqE (534 aa).

12 consecutive transmembrane segments (helical) span residues 48 to 68, 109 to 129, 136 to 156, 169 to 189, 194 to 214, 228 to 248, 326 to 346, 349 to 369, 379 to 399, 407 to 427, 447 to 467, and 478 to 498; these read LLLF…VCAS, LWTS…GFLA, WTAV…VFSS, GAVV…VAPI, ALLQ…LGIV, IVFG…FLVP, AIGV…GLNV, VFDI…LGWL, LWLW…ALGF, LAIA…TVGV, VAFI…PYMY, and TGFV…FLVP.

Belongs to the major facilitator superfamily. Sugar transporter (TC 2.A.1.1) family.

The protein resides in the cytoplasmic vesicle membrane. MFS transporter; part of the gene cluster that mediates the biosynthesis of the antitumor cytotoxic peptidyl alkaloids fumiquinazolines that confer a dual-usage capability to defend against phagocytes in the environment and animal hosts. Probably involved in fumiquinazolines metabolism and transport. This chain is MFS transporter fmqE, found in Aspergillus fumigatus (strain ATCC MYA-4609 / CBS 101355 / FGSC A1100 / Af293) (Neosartorya fumigata).